Reading from the N-terminus, the 570-residue chain is Developmental and secondary metabolism regulator veA (570 aa).

4 disordered regions span residues 1-24 (MATR…ISRE), 39-60 (ERAR…VDPP), 266-491 (DMYA…LGSG), and 504-541 (KRSH…DYGR). The Velvet domain occupies 25 to 231 (GKKITYKLSV…AEQGCRVRIR (207 aa)). The short motif at 39–44 (ERARAC) is the Nuclear localization signal element. The segment covering 278 to 287 (STSISTTADT) has biased composition (polar residues). A compositionally biased stretch (low complexity) spans 315–335 (SMPAASAAPAPAPVHSPATSA). Composition is skewed to polar residues over residues 336–354 (QTSS…SQYP), 363–395 (QSAT…TSSG), and 427–445 (NMQT…YPTL). Positions 454–493 (PTPANHVTSLPPLKVLSGEYSHPSQPNAQSPHHDLGSGKR) are PEST. The segment covering 505–526 (RSHEETFGSDERPLHNGMRPDM) has biased composition (basic and acidic residues).

Belongs to the velvet family. VeA subfamily. As to quaternary structure, component of the heterotrimeric velvet complex composed of laeA, veA and velB; VeA acting as a bridging protein between laeA and velB.

The protein resides in the nucleus. Its subcellular location is the cytoplasm. Component of the velvet transcription factor complex that controls sexual/asexual developmental ratio in response to light, promoting sexual development in the darkness while stimulating asexual sporulation under illumination. The velvet complex hat acts as a global regulator for secondary metabolite gene expression. Controls the expression of hundreds of genes, including those comprising more than a dozen known secondary metabolite gene clusters. Controls the expression of the gliotoxin gene cluster. Controls the expression of the fumagillin, fumitremorgin G, fumigaclavine C and glionitrin gene clusters. The regulation of the fumagillin gene cluster and fumagillin production is performed through direct control of the expression of fumR. Negatively regulates conidiation. Required for normal protease activity. The chain is Developmental and secondary metabolism regulator veA from Aspergillus fumigatus (strain ATCC MYA-4609 / CBS 101355 / FGSC A1100 / Af293) (Neosartorya fumigata).